A 639-amino-acid polypeptide reads, in one-letter code: UvrABC system protein C (639 aa).

The GIY-YIG domain maps to 31–109 (EQAGVYRMYD…IKKYQPKYNI (79 aa)). Positions 218–253 (SAVIEQLVARMELASNELHFELAAKYRDQIVTLRKV) constitute a UVR domain.

It belongs to the UvrC family. Interacts with UvrB in an incision complex.

It localises to the cytoplasm. In terms of biological role, the UvrABC repair system catalyzes the recognition and processing of DNA lesions. UvrC both incises the 5' and 3' sides of the lesion. The N-terminal half is responsible for the 3' incision and the C-terminal half is responsible for the 5' incision. The polypeptide is UvrABC system protein C (Colwellia psychrerythraea (strain 34H / ATCC BAA-681) (Vibrio psychroerythus)).